Reading from the N-terminus, the 663-residue chain is MIDKRDDKPFKLKSKYKPSGDQPQAIESLVDNIEGGEKAQILLGATGTGKTYTMSQVISKVNKPTLVIAHNKTLAGQLYGEFKEFFPDNAVEYFVSYYDYYQPEAYVPSSDTYIEKDSSVNDEIDKLRHSATSSLLERNDVIVVASVSCIYGLGSPKEYADSAVSLRPGQEISRDTLLNQLVDIQFERNDIDFQRGCFRVRGDVVEVFPASRDEHAFRVEFFGDEIDRICEIESLTGKTIGEVDHLVLFPATHFVTNDEHMEQSIAKIQAELAEQLQLFESEGKLLEAQRLRQRTEYDIEMLREMGYTSGVENYSRHMDGRSPGEPPYTLLDFFPEDFLIMIDESHMTMGQIKGMYNGDQARKQMLVDYGFRLPSALDNRPLRREEFESHVHQIVYVSATPGEYEMSQTNTIIEQIIRPTGLLDPEIDVRSSMGQMDDLLGEINQRVARDERTFITTLTKKMAEDLTDYLKEMGVKVKYMHSDIKTLERTEIIRDLRLGIFDVLIGINLLREGIDVPEVSLVAILDADKEGFLRNERGLIQTIGRAARNVDGHVIMYADKMTDSMQRAIDETARRREIQIAYNKAHGIVPQTIKKDIRGLISISKTSHNDISKEEMDYESMSRGERKEAINALQKQMQEAAELLDFELAAQMRDLILELKLMD.

Positions 1 to 10 (MIDKRDDKPF) are enriched in basic and acidic residues. Residues 1–23 (MIDKRDDKPFKLKSKYKPSGDQP) are disordered. Residues 31–271 (DNIEGGEKAQ…EQSIAKIQAE (241 aa)) form the Helicase ATP-binding domain. Residue 44 to 51 (GATGTGKT) coordinates ATP. Residues 97–120 (YYDYYQPEAYVPSSDTYIEKDSSV) carry the Beta-hairpin motif. The 167-residue stretch at 435–601 (QMDDLLGEIN…TIKKDIRGLI (167 aa)) folds into the Helicase C-terminal domain. Residues 627–662 (KEAINALQKQMQEAAELLDFELAAQMRDLILELKLM) form the UVR domain.

The protein belongs to the UvrB family. Forms a heterotetramer with UvrA during the search for lesions. Interacts with UvrC in an incision complex.

The protein localises to the cytoplasm. In terms of biological role, the UvrABC repair system catalyzes the recognition and processing of DNA lesions. A damage recognition complex composed of 2 UvrA and 2 UvrB subunits scans DNA for abnormalities. Upon binding of the UvrA(2)B(2) complex to a putative damaged site, the DNA wraps around one UvrB monomer. DNA wrap is dependent on ATP binding by UvrB and probably causes local melting of the DNA helix, facilitating insertion of UvrB beta-hairpin between the DNA strands. Then UvrB probes one DNA strand for the presence of a lesion. If a lesion is found the UvrA subunits dissociate and the UvrB-DNA preincision complex is formed. This complex is subsequently bound by UvrC and the second UvrB is released. If no lesion is found, the DNA wraps around the other UvrB subunit that will check the other stand for damage. This is UvrABC system protein B from Streptococcus pyogenes serotype M4 (strain MGAS10750).